The chain runs to 1030 residues: Semaphorin-6A (1030 aa).

Positions 1 to 18 (MRSEALLLYFTLLHFAGA) are cleaved as a signal peptide. The Extracellular portion of the chain corresponds to 19-649 (GFPEDSEPIS…KGHDQLVPVT (631 aa)). Residues 24-512 (SEPISISHGN…FSTCVIKVPL (489 aa)) enclose the Sema domain. N-linked (GlcNAc...) asparagine glycans are attached at residues asparagine 33, asparagine 49, and asparagine 65. Cystine bridges form between cysteine 107–cysteine 117, cysteine 135–cysteine 144, cysteine 258–cysteine 369, and cysteine 283–cysteine 328. Asparagine 282 carries N-linked (GlcNAc...) asparagine glycosylation. Residues asparagine 434 and asparagine 461 are each glycosylated (N-linked (GlcNAc...) asparagine). Cystine bridges form between cysteine 477–cysteine 506, cysteine 515–cysteine 533, cysteine 521–cysteine 568, and cysteine 525–cysteine 542. A helical membrane pass occupies residues 650-670 (LLAIAVILAFVMGAVFSGITV). At 671 to 1030 (YCVCDHRRKD…TSMKPNDACT (360 aa)) the chain is on the cytoplasmic side. Phosphoserine is present on serine 698. Disordered regions lie at residues 754-778 (ALPT…REWE), 860-897 (SSKS…SLSQ), and 912-1030 (YGVD…DACT). The segment covering 920–936 (YPTNSLTRSHQATTLKR) has biased composition (polar residues). The span at 937–952 (NNTNSSNSSHLSRNQS) shows a compositional bias: low complexity. Phosphoserine is present on serine 952. Composition is skewed to polar residues over residues 970–997 (QVHS…SLTR) and 1018–1030 (PLST…DACT).

The protein belongs to the semaphorin family. As to quaternary structure, active as a homodimer or oligomer. The SEMA6A homodimer interacts with a PLXNA2 homodimer, giving rise to a heterotetramer. Interacts with EVL. (Microbial infection) Interacts with P.sordellii toxin TcsL; semaphorins SEMA6A and SEMA6B constitute the major host receptors for TcsL in the vascular endothelium.

Its subcellular location is the cell membrane. Its function is as follows. Cell surface receptor for PLXNA2 that plays an important role in cell-cell signaling. Required for normal granule cell migration in the developing cerebellum. Promotes reorganization of the actin cytoskeleton and plays an important role in axon guidance in the developing central nervous system. Can act as repulsive axon guidance cue. Has repulsive action towards migrating granular neurons. May play a role in channeling sympathetic axons into the sympathetic chains and controlling the temporal sequence of sympathetic target innervation. (Microbial infection) Acts as a receptor for P.sordellii toxin TcsL in the in the vascular endothelium. This chain is Semaphorin-6A (SEMA6A), found in Homo sapiens (Human).